The chain runs to 435 residues: Eukaryotic translation initiation factor 3 subunit E (435 aa).

The PCI domain occupies 219–392; sequence FFNHAKGRDL…GHVVMGTQPL (174 aa).

This sequence belongs to the eIF-3 subunit E family. As to quaternary structure, component of the eukaryotic translation initiation factor 3 (eIF-3) complex.

It localises to the cytoplasm. Component of the eukaryotic translation initiation factor 3 (eIF-3) complex, which is involved in protein synthesis of a specialized repertoire of mRNAs and, together with other initiation factors, stimulates binding of mRNA and methionyl-tRNAi to the 40S ribosome. The eIF-3 complex specifically targets and initiates translation of a subset of mRNAs involved in cell proliferation. In Culex quinquefasciatus (Southern house mosquito), this protein is Eukaryotic translation initiation factor 3 subunit E (eIF3-S6).